A 767-amino-acid polypeptide reads, in one-letter code: MNSLLRCCLIKPINIKNTTSFINKLNPKSIIQKSNNYNNINKNILNKFKDSSSNYFINSNKILEICNNNNNNNKYNVNKRNYSSSSNSGNNNNNNYNNKNNNNNNESFYKKFENSFEIKRIKDILFIIVGTFVIFKIYDNKIGIVFCENEIDKETILNDPYDKIPNEIIVELKDSAKDDNIIEESDEDDGIKKISSFKLFFKTIGNDIWLFGFGIITAFFSSWVGLQIPKVFGVLIDCTKNGDSLQGPAIQAIFILLAQAGLNFLYSTMISVACERYSARLRSTLFGAMLEQEIGFFDQNSTGDLINRLSSDVQLVRSALKHSVSLGVKSFGQIVGGVISLILISPKLSLGMMTILPTMVSVGTFYAGWLKSLSVRSQRAQAQSTIVAEEAIGNIRTVQAFSNQHYESERFIEKNQHSLALSTESGVQIGIFQGVTSLALNSVSLLVYWYGGTLVSRGEMTGGQLTSFIIHTMNMQSSFSQLSILFTQIMSAMGGMQRITELINRVPLINSNQGFKLRELKGEIKFINVDFKYPTRPHVHVLNGLNLTLKPGQVVALAGSSGGGKSTIAGLLERFYDISNGDITIDGYSIKQLNAKWLRSRIGIVSQEPSLFATTILENLRYGNPNATEDEIIEAAKLANAHQFISNFPKGYETIVGERGVQLSGGQKQRIAIARAILKNPQIIILDEATSALDSQSELLVQTALDNLMKGRTTLVIAHRLSTVQNADLIGVLSHGKIAEFGNHNELMNHKGLYYKLVQRQLSQQQQ.

The interval asparagine 81 to asparagine 104 is disordered. A run of 5 helical transmembrane segments spans residues isoleucine 208–isoleucine 228, alanine 252–valine 272, valine 324–isoleucine 344, leucine 350–leucine 370, and isoleucine 429–tryptophan 449. The region spanning phenylalanine 211–serine 491 is the ABC transmembrane type-1 domain. An ABC transporter domain is found at isoleucine 524–arginine 760. Position 559–566 (glycine 559–serine 566) interacts with ATP.

It belongs to the ABC transporter superfamily. ABCB family. Multidrug resistance exporter (TC 3.A.1.201) subfamily.

The protein localises to the membrane. In Dictyostelium discoideum (Social amoeba), this protein is ABC transporter B family member 4 (abcB4).